A 372-amino-acid chain; its full sequence is Chaperone protein DnaJ (372 aa).

Residues 5 to 70 form the J domain; that stretch reads DYYEVLGVSK…QKRAAYDQYG (66 aa). A CR-type zinc finger spans residues 127 to 205; the sequence is GVTKEIRIPT…CHGHGRVERY (79 aa). Positions 140, 143, 157, 160, 179, 182, 193, and 196 each coordinate Zn(2+). CXXCXGXG motif repeat units follow at residues 140–147, 157–164, 179–186, and 193–200; these read CDICHGSG, CSTCQGAG, CPHCHGRG, and CHKCHGHG.

Belongs to the DnaJ family. As to quaternary structure, homodimer. Zn(2+) is required as a cofactor.

The protein localises to the cytoplasm. Participates actively in the response to hyperosmotic and heat shock by preventing the aggregation of stress-denatured proteins and by disaggregating proteins, also in an autonomous, DnaK-independent fashion. Unfolded proteins bind initially to DnaJ; upon interaction with the DnaJ-bound protein, DnaK hydrolyzes its bound ATP, resulting in the formation of a stable complex. GrpE releases ADP from DnaK; ATP binding to DnaK triggers the release of the substrate protein, thus completing the reaction cycle. Several rounds of ATP-dependent interactions between DnaJ, DnaK and GrpE are required for fully efficient folding. Also involved, together with DnaK and GrpE, in the DNA replication of plasmids through activation of initiation proteins. The polypeptide is Chaperone protein DnaJ (Photorhabdus laumondii subsp. laumondii (strain DSM 15139 / CIP 105565 / TT01) (Photorhabdus luminescens subsp. laumondii)).